A 135-amino-acid polypeptide reads, in one-letter code: Small ribosomal subunit protein uS12c (135 aa).

The protein belongs to the universal ribosomal protein uS12 family. In terms of assembly, part of the 30S ribosomal subunit.

It is found in the plastid. Its subcellular location is the chloroplast. Its function is as follows. With S4 and S5 plays an important role in translational accuracy. Located at the interface of the 30S and 50S subunits. The sequence is that of Small ribosomal subunit protein uS12c (rps12) from Adiantum capillus-veneris (Maidenhair fern).